The primary structure comprises 195 residues: Cbp/p300-interacting transactivator 1 (195 aa).

2 disordered regions span residues 1–24 (MPTM…NANP) and 51–149 (ASNG…SPAI). Low complexity predominate over residues 54 to 78 (GTKASGAPTSSSGSPSPISSSTATP). Residues 97–106 (MQLQKLNSQY) show a composition bias toward polar residues. Residues 137–148 (SLSPSAGAQSPA) are compositionally biased toward low complexity. Positions 160 to 169 (LMSLVVELGL) match the Nuclear export signal motif.

The protein belongs to the CITED family. Interacts (via C-terminus) with CREBBP. Interacts with EGR2. Homodimer. Binds to RBM14. Interacts (via N-terminus) with HSPA8; the interaction suppresses the association of CITED1 with p300/CBP and SMAD-mediated transcription transactivation. Interacts (via C-terminus) with TOX3 (via HGM box); the interaction increases estrogen-response element (ERE)-dependent transcription and protection against cell death. Interacts with ESR1; the interaction occurs in a estrogen-dependent manner. Interacts (unphosphorylated form preferentially and via C-terminus) with EP300. In terms of processing, phosphorylated. Phosphorylation changes in a cell cycle-dependent manner and reduces its transcriptional cofactor activity.

The protein localises to the nucleus. Its subcellular location is the cytoplasm. In terms of biological role, transcriptional coactivator of the p300/CBP-mediated transcription complex. Enhances SMAD-mediated transcription by strengthening the functional link between the DNA-binding SMAD transcription factors and the p300/CBP transcription coactivator complex. Stimulates estrogen-dependent transactivation activity mediated by estrogen receptors signaling; stabilizes the interaction of estrogen receptor ESR1 and histone acetyltransferase EP300. Positively regulates TGF-beta signaling through its association with the SMAD/p300/CBP-mediated transcriptional coactivator complex. Induces transcription from estrogen-responsive promoters and protection against cell death. Potentiates EGR2-mediated transcriptional activation activity from the ERBB2 promoter. Acts as an inhibitor of osteoblastic mineralization through a cAMP-dependent parathyroid hormone receptor signaling. May play a role in pigmentation of melanocytes. Associates with chromatin to the estrogen-responsive TGF-alpha promoter region in a estrogen-dependent manner. This chain is Cbp/p300-interacting transactivator 1 (CITED1), found in Bos taurus (Bovine).